We begin with the raw amino-acid sequence, 245 residues long: Polyhedrin (245 aa).

Belongs to the polyhedrin family.

Its function is as follows. Major component of the virus occlusion bodies, which are large proteinaceous structures (polyhedra), that protect the virus from the outside environment for extended periods until they are ingested by insect larvae. The sequence is that of Polyhedrin (PH) from Lepidoptera (butterflies and moths).